The primary structure comprises 77 residues: Protein ImpC (77 aa).

It belongs to the DinI family.

This chain is Protein ImpC (impC), found in Salmonella typhimurium.